We begin with the raw amino-acid sequence, 342 residues long: S-adenosylmethionine:tRNA ribosyltransferase-isomerase (342 aa).

Belongs to the QueA family. As to quaternary structure, monomer.

The protein resides in the cytoplasm. It carries out the reaction 7-aminomethyl-7-carbaguanosine(34) in tRNA + S-adenosyl-L-methionine = epoxyqueuosine(34) in tRNA + adenine + L-methionine + 2 H(+). It participates in tRNA modification; tRNA-queuosine biosynthesis. Its function is as follows. Transfers and isomerizes the ribose moiety from AdoMet to the 7-aminomethyl group of 7-deazaguanine (preQ1-tRNA) to give epoxyqueuosine (oQ-tRNA). The protein is S-adenosylmethionine:tRNA ribosyltransferase-isomerase of Streptococcus mutans serotype c (strain ATCC 700610 / UA159).